A 473-amino-acid polypeptide reads, in one-letter code: 3-isopropylmalate dehydratase large subunit (473 aa).

The [4Fe-4S] cluster site is built by C348, C408, and C411.

Belongs to the aconitase/IPM isomerase family. LeuC type 1 subfamily. Heterodimer of LeuC and LeuD. Requires [4Fe-4S] cluster as cofactor.

It catalyses the reaction (2R,3S)-3-isopropylmalate = (2S)-2-isopropylmalate. It participates in amino-acid biosynthesis; L-leucine biosynthesis; L-leucine from 3-methyl-2-oxobutanoate: step 2/4. Catalyzes the isomerization between 2-isopropylmalate and 3-isopropylmalate, via the formation of 2-isopropylmaleate. This Haloarcula marismortui (strain ATCC 43049 / DSM 3752 / JCM 8966 / VKM B-1809) (Halobacterium marismortui) protein is 3-isopropylmalate dehydratase large subunit.